The following is a 493-amino-acid chain: Ketol-acid reductoisomerase (NADP(+)) (493 aa).

Positions L14 to S208 constitute a KARI N-terminal Rossmann domain. Residues C45–Q48, R68, R76, S78, and D108–Q110 contribute to the NADP(+) site. H132 is an active-site residue. G158 lines the NADP(+) pocket. 2 KARI C-terminal knotted domains span residues S209–A345 and D346–M486. Residues D217, E221, E390, and E394 each coordinate Mg(2+). Residue S415 coordinates substrate.

Belongs to the ketol-acid reductoisomerase family. It depends on Mg(2+) as a cofactor.

It carries out the reaction (2R)-2,3-dihydroxy-3-methylbutanoate + NADP(+) = (2S)-2-acetolactate + NADPH + H(+). The enzyme catalyses (2R,3R)-2,3-dihydroxy-3-methylpentanoate + NADP(+) = (S)-2-ethyl-2-hydroxy-3-oxobutanoate + NADPH + H(+). It functions in the pathway amino-acid biosynthesis; L-isoleucine biosynthesis; L-isoleucine from 2-oxobutanoate: step 2/4. Its pathway is amino-acid biosynthesis; L-valine biosynthesis; L-valine from pyruvate: step 2/4. In terms of biological role, involved in the biosynthesis of branched-chain amino acids (BCAA). Catalyzes an alkyl-migration followed by a ketol-acid reduction of (S)-2-acetolactate (S2AL) to yield (R)-2,3-dihydroxy-isovalerate. In the isomerase reaction, S2AL is rearranged via a Mg-dependent methyl migration to produce 3-hydroxy-3-methyl-2-ketobutyrate (HMKB). In the reductase reaction, this 2-ketoacid undergoes a metal-dependent reduction by NADPH to yield (R)-2,3-dihydroxy-isovalerate. In Actinobacillus succinogenes (strain ATCC 55618 / DSM 22257 / CCUG 43843 / 130Z), this protein is Ketol-acid reductoisomerase (NADP(+)).